Here is a 353-residue protein sequence, read N- to C-terminus: MTAILERRESESLWGRFCNWITSTENRLYIGWFGVLMIPTLLTATSVFIIAFIAAPPVDIDGIREPVSGSLLYGNNIISGAIIPTSAAIGLHFYPIWEAASVDEWLYNGGPYELIVLHFLLGVACYMGREWELSFRLGMRPWIAVAYSAPVAAATAVFLIYPIGQGSFSDGMPLGISGTFNFMIVFQAEHNILMHPFHMLGVAGVFGGSLFSAMHGSLVTSSLIRETTENESANEGYRFGQEEETYNIVAAHGYFGRLIFQYASFNNSRSLHFFLAAWPVVGIWFTALGISTMAFNLNGFNFNQSVVDSQGRVINTWADIINRANLGMEVMHERNAHNFPLDLAAVESPSING.

T2 is modified (N-acetylthreonine). T2 carries the phosphothreonine modification. The next 3 membrane-spanning stretches (helical) occupy residues 29–46, 118–133, and 142–156; these read YIGW…TATS, HFLL…EWEL, and WIAV…AATA. H118 contributes to the chlorophyll a binding site. Y126 provides a ligand contact to pheophytin a. Residues D170 and E189 each coordinate [CaMn4O5] cluster. The chain crosses the membrane as a helical span at residues 197–218; sequence FHMLGVAGVFGGSLFSAMHGSL. A chlorophyll a-binding site is contributed by H198. A quinone is bound by residues H215 and 264–265; that span reads SF. Position 215 (H215) interacts with Fe cation. Residue H272 coordinates Fe cation. A helical transmembrane segment spans residues 274 to 288; sequence FLAAWPVVGIWFTAL. [CaMn4O5] cluster is bound by residues H332, E333, D342, and A344. The propeptide occupies 345–353; the sequence is AVESPSING.

Belongs to the reaction center PufL/M/PsbA/D family. In terms of assembly, PSII is composed of 1 copy each of membrane proteins PsbA, PsbB, PsbC, PsbD, PsbE, PsbF, PsbH, PsbI, PsbJ, PsbK, PsbL, PsbM, PsbT, PsbX, PsbY, PsbZ, Psb30/Ycf12, at least 3 peripheral proteins of the oxygen-evolving complex and a large number of cofactors. It forms dimeric complexes. The D1/D2 heterodimer binds P680, chlorophylls that are the primary electron donor of PSII, and subsequent electron acceptors. It shares a non-heme iron and each subunit binds pheophytin, quinone, additional chlorophylls, carotenoids and lipids. D1 provides most of the ligands for the Mn4-Ca-O5 cluster of the oxygen-evolving complex (OEC). There is also a Cl(-1) ion associated with D1 and D2, which is required for oxygen evolution. The PSII complex binds additional chlorophylls, carotenoids and specific lipids. is required as a cofactor. Post-translationally, tyr-161 forms a radical intermediate that is referred to as redox-active TyrZ, YZ or Y-Z. C-terminally processed by CTPA; processing is essential to allow assembly of the oxygen-evolving complex and thus photosynthetic growth.

It is found in the plastid. The protein resides in the chloroplast thylakoid membrane. It catalyses the reaction 2 a plastoquinone + 4 hnu + 2 H2O = 2 a plastoquinol + O2. In terms of biological role, photosystem II (PSII) is a light-driven water:plastoquinone oxidoreductase that uses light energy to abstract electrons from H(2)O, generating O(2) and a proton gradient subsequently used for ATP formation. It consists of a core antenna complex that captures photons, and an electron transfer chain that converts photonic excitation into a charge separation. The D1/D2 (PsbA/PsbD) reaction center heterodimer binds P680, the primary electron donor of PSII as well as several subsequent electron acceptors. The chain is Photosystem II protein D1 from Sinapis alba (White mustard).